A 445-amino-acid polypeptide reads, in one-letter code: MERAPPDGLMNASGALAGEAAAAGGARGFSAAWTAVLAALMALLIVATVLGNALVMLAFVADSSLRTQNNFFLLNLAISDFLVGAFCIPLYVPYVLTGRWTFGRGLCKLWLVVDYLLCASSVFNIVLISYDRFLSVTRAVSYRAQQGDTRRAVRKMALVWVLAFLLYGPAILSWEYLSGGSSIPEGHCYAEFFYNWYFLITASTLEFFTPFLSVTFFNLSIYLNIQRRTRLRLDGGREAGPEPPPDAQPSPPPAPPSCWGCWPKGHGEAMPLHRYGVGEAGPGVETGEAGLGGGSGGGAAASPTSSSGSSSRGTERPRSLKRGSKPSASSASLEKRMKMVSQSITQRFRLSRDKKVAKSLAIIVSIFGLCWAPYTLLMIIRAACHGHCVPDYWYETSFWLLWANSAVNPVLYPLCHYSFRRAFTKLLCPQKLKVQPHGSLEQCWK.

Over 1–39 (MERAPPDGLMNASGALAGEAAAAGGARGFSAAWTAVLAA) the chain is Extracellular. Asn11 carries N-linked (GlcNAc...) asparagine glycosylation. Residues 40-60 (LMALLIVATVLGNALVMLAFV) form a helical membrane-spanning segment. Topologically, residues 61–70 (ADSSLRTQNN) are cytoplasmic. A helical membrane pass occupies residues 71–91 (FFLLNLAISDFLVGAFCIPLY). The Extracellular segment spans residues 92–108 (VPYVLTGRWTFGRGLCK). Cys107 and Cys188 are oxidised to a cystine. Residues 109-129 (LWLVVDYLLCASSVFNIVLIS) traverse the membrane as a helical segment. Residues 130-156 (YDRFLSVTRAVSYRAQQGDTRRAVRKM) are Cytoplasmic-facing. A helical transmembrane segment spans residues 157-177 (ALVWVLAFLLYGPAILSWEYL). At 178–196 (SGGSSIPEGHCYAEFFYNW) the chain is on the extracellular side. The chain crosses the membrane as a helical span at residues 197 to 217 (YFLITASTLEFFTPFLSVTFF). Residues 218-359 (NLSIYLNIQR…LSRDKKVAKS (142 aa)) are Cytoplasmic-facing. 2 disordered regions span residues 234 to 259 (DGGREAGPEPPPDAQPSPPPAPPSCW) and 273 to 336 (HRYG…LEKR). Pro residues predominate over residues 241–256 (PEPPPDAQPSPPPAPP). Residues 289 to 299 (AGLGGGSGGGA) show a composition bias toward gly residues. A compositionally biased stretch (low complexity) spans 300–312 (AASPTSSSGSSSR). The helical transmembrane segment at 360-380 (LAIIVSIFGLCWAPYTLLMII) threads the bilayer. Residues 381–396 (RAACHGHCVPDYWYET) are Extracellular-facing. Residues 397–417 (SFWLLWANSAVNPVLYPLCHY) form a helical membrane-spanning segment. At 418 to 445 (SFRRAFTKLLCPQKLKVQPHGSLEQCWK) the chain is on the cytoplasmic side. Phosphoserine is present on Ser439.

The protein belongs to the G-protein coupled receptor 1 family.

It localises to the cell membrane. Its function is as follows. The H3 subclass of histamine receptors could mediate the histamine signals in CNS and peripheral nervous system. Signals through the inhibition of adenylate cyclase and displays high constitutive activity (spontaneous activity in the absence of agonist). The protein is Histamine H3 receptor (Hrh3) of Mus musculus (Mouse).